We begin with the raw amino-acid sequence, 247 residues long: Probable transcriptional regulatory protein Syncc9605_2132 (247 aa).

It belongs to the TACO1 family.

Its subcellular location is the cytoplasm. In Synechococcus sp. (strain CC9605), this protein is Probable transcriptional regulatory protein Syncc9605_2132.